Consider the following 322-residue polypeptide: uncharacterized protein (322 aa).

The next 8 helical transmembrane spans lie at 7–27, 54–74, 87–107, 128–148, 162–182, 209–229, 249–269, and 287–307; these read IQKI…IGAI, AFAL…LAMF, FVGF…LSGS, IAFC…ITFV, FLSV…YLLI, IGLT…LLPG, GIIS…LFLL, and VIYY…FELL.

To E.coli YbhN.

It localises to the cell membrane. This is an uncharacterized protein from Synechocystis sp. (strain ATCC 27184 / PCC 6803 / Kazusa).